The following is a 110-amino-acid chain: Cytochrome c oxidase subunit 4B (110 aa).

3 helical membrane passes run Y27–A47, G50–F70, and L88–I108.

It belongs to the cytochrome c oxidase bacterial subunit 4 family.

Its subcellular location is the cell membrane. It catalyses the reaction 4 Fe(II)-[cytochrome c] + O2 + 8 H(+)(in) = 4 Fe(III)-[cytochrome c] + 2 H2O + 4 H(+)(out). The protein is Cytochrome c oxidase subunit 4B (ctaF) of Bacillus subtilis (strain 168).